The primary structure comprises 78 residues: Small ribosomal subunit protein uS17 (78 aa).

This sequence belongs to the universal ribosomal protein uS17 family. As to quaternary structure, part of the 30S ribosomal subunit.

Functionally, one of the primary rRNA binding proteins, it binds specifically to the 5'-end of 16S ribosomal RNA. In Maricaulis maris (strain MCS10) (Caulobacter maris), this protein is Small ribosomal subunit protein uS17.